The chain runs to 89 residues: Cell division protein FtsB (89 aa).

Over 1–3 the chain is Cytoplasmic; it reads MRP. Residues 4–21 form a helical membrane-spanning segment; the sequence is IIAILIALFILLQYQLWF. The Periplasmic portion of the chain corresponds to 22 to 89; sequence AAGGIVSVHH…KNEVFYQIVK (68 aa). Positions 29 to 62 form a coiled coil; sequence VHHLNENINHQIMENQKLKDRNTALLADIDDLKH.

Belongs to the FtsB family. Part of a complex composed of FtsB, FtsL and FtsQ.

Its subcellular location is the cell inner membrane. Functionally, essential cell division protein. May link together the upstream cell division proteins, which are predominantly cytoplasmic, with the downstream cell division proteins, which are predominantly periplasmic. The sequence is that of Cell division protein FtsB from Coxiella burnetii (strain RSA 493 / Nine Mile phase I).